The following is a 375-amino-acid chain: Succinyl-diaminopimelate desuccinylase (375 aa).

Position 66 (H66) interacts with Zn(2+). D68 is a catalytic residue. D99 contributes to the Zn(2+) binding site. The Proton acceptor role is filled by E133. 3 residues coordinate Zn(2+): E134, E162, and H348.

Belongs to the peptidase M20A family. DapE subfamily. As to quaternary structure, homodimer. The cofactor is Zn(2+). It depends on Co(2+) as a cofactor.

It catalyses the reaction N-succinyl-(2S,6S)-2,6-diaminopimelate + H2O = (2S,6S)-2,6-diaminopimelate + succinate. Its pathway is amino-acid biosynthesis; L-lysine biosynthesis via DAP pathway; LL-2,6-diaminopimelate from (S)-tetrahydrodipicolinate (succinylase route): step 3/3. Functionally, catalyzes the hydrolysis of N-succinyl-L,L-diaminopimelic acid (SDAP), forming succinate and LL-2,6-diaminopimelate (DAP), an intermediate involved in the bacterial biosynthesis of lysine and meso-diaminopimelic acid, an essential component of bacterial cell walls. This chain is Succinyl-diaminopimelate desuccinylase, found in Shigella dysenteriae serotype 1 (strain Sd197).